The chain runs to 232 residues: Ribose-5-phosphate isomerase A (232 aa).

Substrate-binding positions include 31-34, 87-90, and 100-103; these read TGST, DGAD, and KGGG. Glutamate 109 (proton acceptor) is an active-site residue. Lysine 127 serves as a coordination point for substrate.

This sequence belongs to the ribose 5-phosphate isomerase family. As to quaternary structure, homodimer.

The enzyme catalyses aldehydo-D-ribose 5-phosphate = D-ribulose 5-phosphate. It functions in the pathway carbohydrate degradation; pentose phosphate pathway; D-ribose 5-phosphate from D-ribulose 5-phosphate (non-oxidative stage): step 1/1. Its function is as follows. Catalyzes the reversible conversion of ribose-5-phosphate to ribulose 5-phosphate. The sequence is that of Ribose-5-phosphate isomerase A from Bifidobacterium longum subsp. infantis (strain ATCC 15697 / DSM 20088 / JCM 1222 / NCTC 11817 / S12).